A 128-amino-acid polypeptide reads, in one-letter code: Fluoride-specific ion channel FluC (128 aa).

4 helical membrane passes run 5 to 25 (IVAIFVGAGFGAVLRWFLALA), 35 to 55 (LGTLAANLIGGYVIGVAAVVF), 67 to 87 (LFVITGFLGGLTTFSTYSVEV), and 96 to 116 (FGWAIAVAALHLTGSFTLTAL). 2 residues coordinate Na(+): Gly75 and Thr78.

It belongs to the fluoride channel Fluc/FEX (TC 1.A.43) family.

The protein localises to the cell inner membrane. The enzyme catalyses fluoride(in) = fluoride(out). Na(+) is not transported, but it plays an essential structural role and its presence is essential for fluoride channel function. Functionally, fluoride-specific ion channel. Important for reducing fluoride concentration in the cell, thus reducing its toxicity. The chain is Fluoride-specific ion channel FluC from Burkholderia ambifaria (strain MC40-6).